The following is a 261-amino-acid chain: Calbindin (261 aa).

Position 2 is an N-acetylalanine (Ala-2). The interaction with RANBP9 stretch occupies residues 2–7; that stretch reads AESHLQ. 5 EF-hand domains span residues 11-46, 53-88, 98-133, 142-177, and 186-221; these read ITAS…LQQA, ELSP…EENF, KSCE…LLEK, KLAE…QENF, and MCGK…LCEK. Residues Asp-24, Asp-26, Ser-28, Tyr-30, and Glu-35 each coordinate Ca(2+). Residues Asp-111, Asp-113, Ser-115, Glu-122, Asp-155, Asn-157, Asp-159, Lys-161, Glu-166, Asp-199, Asp-201, Asn-203, Tyr-205, and Glu-210 each coordinate Ca(2+).

It belongs to the calbindin family. In terms of assembly, interacts with RANBP9.

In terms of biological role, buffers cytosolic calcium. May stimulate a membrane Ca(2+)-ATPase and a 3',5'-cyclic nucleotide phosphodiesterase. The protein is Calbindin (CALB1) of Homo sapiens (Human).